The following is a 93-amino-acid chain: Small ribosomal subunit protein uS19 (93 aa).

This sequence belongs to the universal ribosomal protein uS19 family.

In terms of biological role, protein S19 forms a complex with S13 that binds strongly to the 16S ribosomal RNA. The polypeptide is Small ribosomal subunit protein uS19 (Ehrlichia chaffeensis (strain ATCC CRL-10679 / Arkansas)).